We begin with the raw amino-acid sequence, 331 residues long: Proton-translocating ferredoxin:NAD(+) oxidoreductase complex subunit D (331 aa).

The next 3 helical transmembrane spans lie at 23-43 (ESVSKIMWSVCLALTPAAVFG), 44-64 (VFNFGIHALEVIITGIIAAVV), and 84-106 (AFLTGLLLSMCLPPDIPPYMVAI). The residue at position 163 (Thr-163) is an FMN phosphoryl threonine. 4 helical membrane passes run 196 to 216 (NGSIGETSTILLVLGGLYLIY), 226 to 246 (VVMIGTVGILTWAFGGTTGIF), 251 to 271 (VFHMMAGGLVIGAFFMATDMV), and 273 to 293 (IPMTIKGQIIFALGAGALTSL).

It belongs to the NqrB/RnfD family. In terms of assembly, the complex is composed of six subunits: RnfA, RnfB, RnfC, RnfD, RnfE and RnfG. It depends on FMN as a cofactor.

The protein resides in the cell membrane. Its function is as follows. Part of a membrane-bound complex that couples electron transfer with translocation of ions across the membrane. Couples electron transfer from reduced ferredoxin to NAD(+) with translocation of H(+) out of the cell. Essential for energy conservation during autotrophic growth. Contributes to ATP synthesis during heterotrophic growth. The polypeptide is Proton-translocating ferredoxin:NAD(+) oxidoreductase complex subunit D (Clostridium ljungdahlii (strain ATCC 55383 / DSM 13528 / PETC)).